A 490-amino-acid chain; its full sequence is Glutamyl-tRNA(Gln) amidotransferase subunit A (490 aa).

Residues K76 and S151 each act as charge relay system in the active site. Residue S175 is the Acyl-ester intermediate of the active site.

Belongs to the amidase family. GatA subfamily. In terms of assembly, heterotrimer of A, B and C subunits.

The catalysed reaction is L-glutamyl-tRNA(Gln) + L-glutamine + ATP + H2O = L-glutaminyl-tRNA(Gln) + L-glutamate + ADP + phosphate + H(+). Its function is as follows. Allows the formation of correctly charged Gln-tRNA(Gln) through the transamidation of misacylated Glu-tRNA(Gln) in organisms which lack glutaminyl-tRNA synthetase. The reaction takes place in the presence of glutamine and ATP through an activated gamma-phospho-Glu-tRNA(Gln). The protein is Glutamyl-tRNA(Gln) amidotransferase subunit A of Aromatoleum aromaticum (strain DSM 19018 / LMG 30748 / EbN1) (Azoarcus sp. (strain EbN1)).